Consider the following 354-residue polypeptide: Elongation factor Ts (354 aa).

The tract at residues 81-84 (TDFV) is involved in Mg(2+) ion dislocation from EF-Tu.

Belongs to the EF-Ts family.

It localises to the cytoplasm. Functionally, associates with the EF-Tu.GDP complex and induces the exchange of GDP to GTP. It remains bound to the aminoacyl-tRNA.EF-Tu.GTP complex up to the GTP hydrolysis stage on the ribosome. This is Elongation factor Ts from Campylobacter fetus subsp. fetus (strain 82-40).